The primary structure comprises 215 residues: Redox-sensing transcriptional repressor Rex 2 (215 aa).

Positions 15 to 54 form a DNA-binding region, H-T-H motif; the sequence is VYLRYLKMLGDSGVKRIKSREFSEMIQIPSATIRRDFSHV. 89–94 provides a ligand contact to NAD(+); sequence GCGNLG.

This sequence belongs to the transcriptional regulatory Rex family. In terms of assembly, homodimer.

It is found in the cytoplasm. Its function is as follows. Modulates transcription in response to changes in cellular NADH/NAD(+) redox state. This chain is Redox-sensing transcriptional repressor Rex 2, found in Enterococcus faecalis (strain ATCC 700802 / V583).